We begin with the raw amino-acid sequence, 485 residues long: E3 ubiquitin-protein ligase RNF8 (485 aa).

An FHA domain is found at valine 38–leucine 92. The required for interaction with PIWIL1 stretch occupies residues glutamine 68–glycine 72. Serine 157 carries the phosphoserine modification. A disordered region spans residues cysteine 181–isoleucine 220. Residues cysteine 403–arginine 441 form an RING-type zinc finger.

Belongs to the RNF8 family. In terms of assembly, homodimer. Forms a E2-E3 ubiquitin ligase complex composed of the RNF8 homodimer and a E2 heterodimer of UBE2N and UBE2V2. Interacts with class III E2s, including UBE2E1, UBE2E2, and UBE2E3 and with UBE2N. Interacts with RXRA. Interacts (via FHA domain) with ATM-phosphorylated MDC1. Interacts (via FHA domain) with 'Thr-4827' phosphorylated HERC2 (via C-terminus). Interacts with PIWIL1; leading to sequester RNF8 in the cytoplasm. Interacts with WRAP53/TCAB1. (Microbial infection) Interacts (via FHA domain) with phosphorylated human herpesvirus 1 ICP0 protein; leading to RNF8 degradation by the proteasome. Autoubiquitinated through 'Lys-48' and 'Lys-63' of ubiquitin. 'Lys-63' polyubiquitination is mediated by UBE2N. 'Lys-29'-type polyubiquitination is also observed, but it doesn't require its own functional RING-type zinc finger. Ubiquitous. In fetal tissues, highest expression in brain, thymus and liver. In adult tissues, highest levels in brain and testis, lowest levels in peripheral blood cells.

It is found in the nucleus. It localises to the cytoplasm. Its subcellular location is the midbody. The protein localises to the chromosome. The protein resides in the telomere. It catalyses the reaction S-ubiquitinyl-[E2 ubiquitin-conjugating enzyme]-L-cysteine + [acceptor protein]-L-lysine = [E2 ubiquitin-conjugating enzyme]-L-cysteine + N(6)-ubiquitinyl-[acceptor protein]-L-lysine.. The protein operates within protein modification; protein ubiquitination. Functionally, E3 ubiquitin-protein ligase that plays a key role in DNA damage signaling via 2 distinct roles: by mediating the 'Lys-63'-linked ubiquitination of histones H2A and H2AX and promoting the recruitment of DNA repair proteins at double-strand breaks (DSBs) sites, and by catalyzing 'Lys-48'-linked ubiquitination to remove target proteins from DNA damage sites. Following DNA DSBs, it is recruited to the sites of damage by ATM-phosphorylated MDC1 and catalyzes the 'Lys-63'-linked ubiquitination of histones H2A and H2AX, thereby promoting the formation of TP53BP1 and BRCA1 ionizing radiation-induced foci (IRIF). Also controls the recruitment of UIMC1-BRCC3 (RAP80-BRCC36) and PAXIP1/PTIP to DNA damage sites. Promotes the recruitment of NBN to DNA damage sites by catalyzing 'Lys-6'-linked ubiquitination of NBN. Also recruited at DNA interstrand cross-links (ICLs) sites and catalyzes 'Lys-63'-linked ubiquitination of histones H2A and H2AX, leading to recruitment of FAAP20/C1orf86 and Fanconi anemia (FA) complex, followed by interstrand cross-link repair. H2A ubiquitination also mediates the ATM-dependent transcriptional silencing at regions flanking DSBs in cis, a mechanism to avoid collision between transcription and repair intermediates. Promotes the formation of 'Lys-63'-linked polyubiquitin chains via interactions with the specific ubiquitin-conjugating UBE2N/UBC13 and ubiquitinates non-histone substrates such as PCNA. Substrates that are polyubiquitinated at 'Lys-63' are usually not targeted for degradation. Also catalyzes the formation of 'Lys-48'-linked polyubiquitin chains via interaction with the ubiquitin-conjugating UBE2L6/UBCH8, leading to degradation of substrate proteins such as CHEK2, JMJD2A/KDM4A and KU80/XRCC5: it is still unclear how the preference toward 'Lys-48'- versus 'Lys-63'-linked ubiquitination is regulated but it could be due to RNF8 ability to interact with specific E2 specific ligases. For instance, interaction with phosphorylated HERC2 promotes the association between RNF8 and UBE2N/UBC13 and favors the specific formation of 'Lys-63'-linked ubiquitin chains. Promotes non-homologous end joining (NHEJ) by promoting the 'Lys-48'-linked ubiquitination and degradation the of KU80/XRCC5. Following DNA damage, mediates the ubiquitination and degradation of JMJD2A/KDM4A in collaboration with RNF168, leading to unmask H4K20me2 mark and promote the recruitment of TP53BP1 at DNA damage sites. Following DNA damage, mediates the ubiquitination and degradation of POLD4/p12, a subunit of DNA polymerase delta. In the absence of POLD4, DNA polymerase delta complex exhibits higher proofreading activity. In addition to its function in damage signaling, also plays a role in higher-order chromatin structure by mediating extensive chromatin decondensation. Involved in the activation of ATM by promoting histone H2B ubiquitination, which indirectly triggers histone H4 'Lys-16' acetylation (H4K16ac), establishing a chromatin environment that promotes efficient activation of ATM kinase. Required in the testis, where it plays a role in the replacement of histones during spermatogenesis. At uncapped telomeres, promotes the joining of deprotected chromosome ends by inducing H2A ubiquitination and TP53BP1 recruitment, suggesting that it may enhance cancer development by aggravating telomere-induced genome instability in case of telomeric crisis. Promotes the assembly of RAD51 at DNA DSBs in the absence of BRCA1 and TP53BP1 Also involved in class switch recombination in immune system, via its role in regulation of DSBs repair. May be required for proper exit from mitosis after spindle checkpoint activation and may regulate cytokinesis. May play a role in the regulation of RXRA-mediated transcriptional activity. Not involved in RXRA ubiquitination by UBE2E2. This chain is E3 ubiquitin-protein ligase RNF8, found in Homo sapiens (Human).